We begin with the raw amino-acid sequence, 95 residues long: Pyrimidine/purine nucleoside phosphorylase (95 aa).

The protein belongs to the nucleoside phosphorylase PpnP family.

It carries out the reaction a purine D-ribonucleoside + phosphate = a purine nucleobase + alpha-D-ribose 1-phosphate. The enzyme catalyses adenosine + phosphate = alpha-D-ribose 1-phosphate + adenine. The catalysed reaction is cytidine + phosphate = cytosine + alpha-D-ribose 1-phosphate. It catalyses the reaction guanosine + phosphate = alpha-D-ribose 1-phosphate + guanine. It carries out the reaction inosine + phosphate = alpha-D-ribose 1-phosphate + hypoxanthine. The enzyme catalyses thymidine + phosphate = 2-deoxy-alpha-D-ribose 1-phosphate + thymine. The catalysed reaction is uridine + phosphate = alpha-D-ribose 1-phosphate + uracil. It catalyses the reaction xanthosine + phosphate = alpha-D-ribose 1-phosphate + xanthine. Catalyzes the phosphorolysis of diverse nucleosides, yielding D-ribose 1-phosphate and the respective free bases. Can use uridine, adenosine, guanosine, cytidine, thymidine, inosine and xanthosine as substrates. Also catalyzes the reverse reactions. The sequence is that of Pyrimidine/purine nucleoside phosphorylase from Enterobacter sp. (strain 638).